The chain runs to 256 residues: Probable transcriptional regulatory protein cce_0894 (256 aa).

The protein belongs to the TACO1 family.

The protein localises to the cytoplasm. The chain is Probable transcriptional regulatory protein cce_0894 from Crocosphaera subtropica (strain ATCC 51142 / BH68) (Cyanothece sp. (strain ATCC 51142)).